The sequence spans 634 residues: Probable LRR receptor-like serine/threonine-protein kinase At2g23950 (634 aa).

Residues Met-1 to Ser-27 form the signal peptide. Residues Ser-28–Ala-236 lie on the Extracellular side of the membrane. 2 N-linked (GlcNAc...) asparagine glycosylation sites follow: Asn-96 and Asn-109. 4 LRR repeats span residues Asn-99–Leu-121, Lys-123–Leu-145, Asn-147–Ser-167, and His-171–Thr-193. Residue Asn-155 is glycosylated (N-linked (GlcNAc...) asparagine). Residues Val-237–Trp-257 form a helical membrane-spanning segment. Over Tyr-258–Arg-634 the chain is Cytoplasmic. Thr-296 is subject to Phosphothreonine. Positions Phe-299–Leu-554 constitute a Protein kinase domain. Leu-305–Val-313 provides a ligand contact to ATP. Thr-322 carries the phosphothreonine modification. Lys-327 contacts ATP. Phosphoserine occurs at positions 380 and 383. Residue Thr-395 is modified to Phosphothreonine. Residue Asp-422 is the Proton acceptor of the active site. Residues Thr-455, Thr-456, and Thr-461 each carry the phosphothreonine modification. Tyr-469 is modified (phosphotyrosine). Ser-471 carries the phosphoserine modification. Thr-472 is modified (phosphothreonine). A Phosphoserine modification is found at Ser-476. The residue at position 551 (Thr-551) is a Phosphothreonine.

Belongs to the protein kinase superfamily. Ser/Thr protein kinase family.

It localises to the membrane. The enzyme catalyses L-seryl-[protein] + ATP = O-phospho-L-seryl-[protein] + ADP + H(+). The catalysed reaction is L-threonyl-[protein] + ATP = O-phospho-L-threonyl-[protein] + ADP + H(+). The protein is Probable LRR receptor-like serine/threonine-protein kinase At2g23950 of Arabidopsis thaliana (Mouse-ear cress).